We begin with the raw amino-acid sequence, 163 residues long: uncharacterized protein (163 aa).

Over residues 1 to 10 (MTHPLPHDSH) the composition is skewed to basic and acidic residues. Disordered stretches follow at residues 1 to 21 (MTHP…VNKS) and 71 to 112 (SKQP…EQRR). Positions 90 to 105 (PASSLQDHSRLTSLSR) are enriched in polar residues.

This is an uncharacterized protein from Homo sapiens (Human).